A 183-amino-acid chain; its full sequence is NAD(P)H-quinone oxidoreductase subunit J (183 aa).

Residues 1–21 (MAEENAQEKQAPPSAGEQSEP) form a disordered region.

It belongs to the complex I 30 kDa subunit family. NDH-1 can be composed of about 15 different subunits; different subcomplexes with different compositions have been identified which probably have different functions.

The protein localises to the cellular thylakoid membrane. The enzyme catalyses a plastoquinone + NADH + (n+1) H(+)(in) = a plastoquinol + NAD(+) + n H(+)(out). The catalysed reaction is a plastoquinone + NADPH + (n+1) H(+)(in) = a plastoquinol + NADP(+) + n H(+)(out). In terms of biological role, NDH-1 shuttles electrons from an unknown electron donor, via FMN and iron-sulfur (Fe-S) centers, to quinones in the respiratory and/or the photosynthetic chain. The immediate electron acceptor for the enzyme in this species is believed to be plastoquinone. Couples the redox reaction to proton translocation, and thus conserves the redox energy in a proton gradient. Cyanobacterial NDH-1 also plays a role in inorganic carbon-concentration. This Synechococcus sp. (strain JA-2-3B'a(2-13)) (Cyanobacteria bacterium Yellowstone B-Prime) protein is NAD(P)H-quinone oxidoreductase subunit J.